A 773-amino-acid chain; its full sequence is Leucine-rich repeat and calponin homology domain-containing protein 2 (773 aa).

The tract at residues 1–46 is disordered; that stretch reads MAASQGGGGNSGGGGCSGGGSGGGGGAAGGGGGGGGGGGGGAGAGG. LRR repeat units follow at residues 97-118, 120-141, 143-164, 166-187, 188-209, 211-232, 234-256, 257-277, and 279-300; these read NSGILSLSGRKLREFPGSGYDL, DTTQADLSRNRFTEIPSDVWLF, PLETLNLYHNCIKTIPEAIKNL, MLTYLNISRNLLSTLPKYLFDL, PLKVLVVSNNKLVSIPEEIGKL, DLMELDVSCNEIQVLPQQMGKL, SLKELNIRRNNLHVLPDELGDLP, LVKLDFSCNKVTEIPVCYRKL, and HLQVIILDNNPLQVPPAQICLK. Disordered stretches follow at residues 324–409, 438–478, and 573–633; these read LDLP…QKDQ, FLKG…LKEV, and KYKS…SRQE. Composition is skewed to basic and acidic residues over residues 386–396 and 440–466; these read SNREQTSRNDS and KGKEKSSEKSQKNEEPPNEKKVDKEQL. Residues 594-603 are compositionally biased toward polar residues; the sequence is AHMSAQSPVS. A Calponin-homology (CH) domain is found at 650-763; sequence LREEREQIRQ…VTVQALLELP (114 aa).

Its function is as follows. May play a role in the organization of the cytoskeleton. In Mus musculus (Mouse), this protein is Leucine-rich repeat and calponin homology domain-containing protein 2 (Lrch2).